An 83-amino-acid polypeptide reads, in one-letter code: Small ribosomal subunit protein uS17 (83 aa).

Belongs to the universal ribosomal protein uS17 family. As to quaternary structure, part of the 30S ribosomal subunit.

In terms of biological role, one of the primary rRNA binding proteins, it binds specifically to the 5'-end of 16S ribosomal RNA. This chain is Small ribosomal subunit protein uS17, found in Pseudoalteromonas atlantica (strain T6c / ATCC BAA-1087).